The sequence spans 545 residues: Serine/threonine-protein kinase PAK 1 (545 aa).

A disordered region spans residues 1-77 (MSNNGLDIQD…KEKERPEISL (77 aa)). An N-acetylserine modification is found at Ser2. Ser21 carries the post-translational modification Phosphoserine; by PKB and autocatalysis. Ser57 is subject to Phosphoserine; by autocatalysis. Residues 68–77 (KEKERPEISL) show a composition bias toward basic and acidic residues. The segment at 70–140 (KERPEISLPS…YNSKKTSNSQ (71 aa)) is autoregulatory region. A CRIB domain is found at 75–88 (ISLPSDFEHTIHVG). Positions 75–105 (ISLPSDFEHTIHVGFDAVTGEFTGMPEQWAR) are GTPase-binding. Thr84 bears the Phosphothreonine; by OXSR1 mark. At Ser115 the chain carries Phosphoserine. Phosphotyrosine is present on residues Tyr131 and Tyr142. Ser144 is modified (phosphoserine; by autocatalysis). Position 149 is a phosphoserine (Ser149). Position 153 is a phosphotyrosine; by JAK2 (Tyr153). Positions 159 to 198 (LNVKAVSETPAVPPVSEDEDDDDDDATPPPVIAPRPEHTK) are disordered. Position 174 is a phosphoserine (Ser174). Over residues 174–184 (SEDEDDDDDDA) the composition is skewed to acidic residues. Thr185 bears the Phosphothreonine mark. The residue at position 199 (Ser199) is a Phosphoserine; by autocatalysis. The residue at position 201 (Tyr201) is a Phosphotyrosine; by JAK2. A Phosphoserine modification is found at Ser204. Residues 211–251 (VTPTRDVATSPISPTENNTTPPDALTRNTEKQKKKPKMSDE) are disordered. Phosphothreonine is present on residues Thr212 and Thr219. Phosphoserine occurs at positions 220 and 223. The segment covering 220–231 (SPISPTENNTTP) has biased composition (polar residues). Phosphothreonine occurs at positions 225, 229, and 230. The region spanning 270-521 (YTRFEKIGQG…AKELLQHQFL (252 aa)) is the Protein kinase domain. ATP is bound at residue 276-284 (IGQGASGTV). Tyr285 is subject to Phosphotyrosine; by JAK2. Residues Lys299 and 345 to 347 (EYL) contribute to the ATP site. Catalysis depends on Asp389, which acts as the Proton acceptor. The residue at position 423 (Thr423) is a Phosphothreonine; by autocatalysis, BRSK2 and PDPK1.

It belongs to the protein kinase superfamily. STE Ser/Thr protein kinase family. STE20 subfamily. In terms of assembly, homodimer; homodimerization results in autoinhibition. Active as monomer. Interacts with GIT1. Component of cytoplasmic complexes, which also contains PXN, ARHGEF7 and GIT1. Interacts with NISCH. Interacts with DVL1; mediates the formation of a DVL1, MUSK and PAK1 ternary complex involved in AChR clustering. Binds to the caspase-cleaved p110 isoform of CDC2L1 and CDC2L2, p110C, but not the full-length proteins. Interacts with ARHGEF7. Interacts tightly with GTP-bound but not GDP-bound CDC42/P21 and RAC1. Interacts with SCRIB. Interacts with PDPK1. Interacts (via kinase domain) with RAF1. Interacts with NCK1 and NCK2. Interacts with TBCB. Interacts with BRSK2. Interacts with SNAI1. Interacts with CIB1 isoform 2. Interacts with CIB1 (via N-terminal region); the interaction is direct, promotes PAK1 activity and occurs in a calcium-dependent manner. Interacts with INPP5K. Interacts with gamma-tubulin. Interacts with RHOU; the interaction promotes PAK1 activation. Mg(2+) is required as a cofactor. In terms of processing, autophosphorylated in trans, meaning that in a dimer, one kinase molecule phosphorylates the other one. Activated by autophosphorylation at Thr-423 in response to a conformation change, triggered by interaction with GTP-bound CDC42 or RAC1. Activated by phosphorylation at Thr-423 by BRSK2 and by PDPK1. Phosphorylated by JAK2 in response to PRL; this increases PAK1 kinase activity. Phosphorylated at Ser-21 by PKB/AKT; this reduces interaction with NCK1 and association with focal adhesion sites. Upon DNA damage, phosphorylated at Thr-212 and translocates to the nucleoplasm. Phosphorylated at tyrosine residues, which can be enhanced by NTN1. In terms of tissue distribution, overexpressed in gastric cancer cells and tissues (at protein level).

It localises to the cytoplasm. The protein localises to the cell junction. It is found in the focal adhesion. Its subcellular location is the cell projection. The protein resides in the lamellipodium. It localises to the cell membrane. The protein localises to the ruffle membrane. It is found in the invadopodium. Its subcellular location is the nucleus. The protein resides in the nucleoplasm. It localises to the chromosome. The protein localises to the cytoskeleton. It is found in the microtubule organizing center. Its subcellular location is the centrosome. It carries out the reaction L-seryl-[protein] + ATP = O-phospho-L-seryl-[protein] + ADP + H(+). The catalysed reaction is L-threonyl-[protein] + ATP = O-phospho-L-threonyl-[protein] + ADP + H(+). Its activity is regulated as follows. Activated by binding small G proteins. Binding of GTP-bound CDC42 or RAC1 to the autoregulatory region releases monomers from the autoinhibited dimer, and enables activation by phosphorylation of Thr-423. Phosphorylation of Thr-84 by OXSR1 inhibits activation. In terms of biological role, protein kinase involved in intracellular signaling pathways downstream of integrins and receptor-type kinases that plays an important role in cytoskeleton dynamics, in cell adhesion, migration, proliferation, apoptosis, mitosis, and in vesicle-mediated transport processes. Can directly phosphorylate BAD and protects cells against apoptosis. Activated by interaction with CDC42 and RAC1. Functions as a GTPase effector that links the Rho-related GTPases CDC42 and RAC1 to the JNK MAP kinase pathway. Phosphorylates and activates MAP2K1, and thereby mediates activation of downstream MAP kinases. Involved in the reorganization of the actin cytoskeleton, actin stress fibers and of focal adhesion complexes. Phosphorylates the tubulin chaperone TBCB and thereby plays a role in the regulation of microtubule biogenesis and organization of the tubulin cytoskeleton. Plays a role in the regulation of insulin secretion in response to elevated glucose levels. Part of a ternary complex that contains PAK1, DVL1 and MUSK that is important for MUSK-dependent regulation of AChR clustering during the formation of the neuromuscular junction (NMJ). Activity is inhibited in cells undergoing apoptosis, potentially due to binding of CDC2L1 and CDC2L2. Phosphorylates MYL9/MLC2. Phosphorylates RAF1 at 'Ser-338' and 'Ser-339' resulting in: activation of RAF1, stimulation of RAF1 translocation to mitochondria, phosphorylation of BAD by RAF1, and RAF1 binding to BCL2. Phosphorylates SNAI1 at 'Ser-246' promoting its transcriptional repressor activity by increasing its accumulation in the nucleus. In podocytes, promotes NR3C2 nuclear localization. Required for atypical chemokine receptor ACKR2-induced phosphorylation of LIMK1 and cofilin (CFL1) and for the up-regulation of ACKR2 from endosomal compartment to cell membrane, increasing its efficiency in chemokine uptake and degradation. In synapses, seems to mediate the regulation of F-actin cluster formation performed by SHANK3, maybe through CFL1 phosphorylation and inactivation. Plays a role in RUFY3-mediated facilitating gastric cancer cells migration and invasion. In response to DNA damage, phosphorylates MORC2 which activates its ATPase activity and facilitates chromatin remodeling. In neurons, plays a crucial role in regulating GABA(A) receptor synaptic stability and hence GABAergic inhibitory synaptic transmission through its role in F-actin stabilization. In hippocampal neurons, necessary for the formation of dendritic spines and excitatory synapses; this function is dependent on kinase activity and may be exerted by the regulation of actomyosin contractility through the phosphorylation of myosin II regulatory light chain (MLC). Along with GIT1, positively regulates microtubule nucleation during interphase. Phosphorylates FXR1, promoting its localization to stress granules and activity. Phosphorylates ILK on 'Thr-173' and 'Ser-246', promoting nuclear export of ILK. The polypeptide is Serine/threonine-protein kinase PAK 1 (Homo sapiens (Human)).